Consider the following 366-residue polypeptide: Adenosine deaminase (366 aa).

2 residues coordinate Zn(2+): His19 and His21. The substrate site is built by His21, Asp23, and Gly181. A Zn(2+)-binding site is contributed by His208. Glu211 serves as the catalytic Proton donor. Asp304 contacts Zn(2+).

This sequence belongs to the metallo-dependent hydrolases superfamily. Adenosine and AMP deaminases family. Adenosine deaminase subfamily. Requires Zn(2+) as cofactor.

The enzyme catalyses adenosine + H2O + H(+) = inosine + NH4(+). It catalyses the reaction 2'-deoxyadenosine + H2O + H(+) = 2'-deoxyinosine + NH4(+). Functionally, catalyzes the hydrolytic deamination of adenosine and 2-deoxyadenosine. The polypeptide is Adenosine deaminase (Mycobacterium avium (strain 104)).